Here is a 276-residue protein sequence, read N- to C-terminus: UPF0328 protein ECU08_2080 (276 aa).

The segment at 1-24 (MGIIDVQRSHLTATPSKERDAPAH) is disordered.

It belongs to the UPF0328 family.

The chain is UPF0328 protein ECU08_2080 from Encephalitozoon cuniculi (strain GB-M1) (Microsporidian parasite).